Consider the following 322-residue polypeptide: Quinolinate synthase (322 aa).

Residues His-38 and Ser-55 each contribute to the iminosuccinate site. Cys-100 is a binding site for [4Fe-4S] cluster. Residues 126–128 (YIN) and Ser-143 each bind iminosuccinate. Cys-186 is a binding site for [4Fe-4S] cluster. Residues 212 to 214 (HPE) and Thr-229 contribute to the iminosuccinate site. Cys-279 provides a ligand contact to [4Fe-4S] cluster.

The protein belongs to the quinolinate synthase family. Type 2 subfamily. The cofactor is [4Fe-4S] cluster.

The protein localises to the cytoplasm. It catalyses the reaction iminosuccinate + dihydroxyacetone phosphate = quinolinate + phosphate + 2 H2O + H(+). It participates in cofactor biosynthesis; NAD(+) biosynthesis; quinolinate from iminoaspartate: step 1/1. Its function is as follows. Catalyzes the condensation of iminoaspartate with dihydroxyacetone phosphate to form quinolinate. The chain is Quinolinate synthase from Cyanothece sp. (strain PCC 7425 / ATCC 29141).